We begin with the raw amino-acid sequence, 644 residues long: MSLIECKNINRYFGSGENRVHILKDISLSIEKGDFVAIIGQSGSGKSTLMNILGCLDTAGSGSYRIDGIETAKMQPDELAALRRERFGFIFQRYNLLSSLTARDNVALPAVYMGMGGKERSARADKLLQDLGLASKEGNKPGELSGGQQQRVSIARALMNGGEIIFADEPTGALDTASGKNVMEIIRRLHEAGHTVIMVTHDPGIAANANRVIEIRDGEIISDTSKNPEIPASNVGRIQEKASWSFYYDQFVEAFRMSVQAVLAHKMRSLLTMLGIIIGIASVVSVVALGNGSQKKILEDISSMGTNTISIFPGRGFGDRRSGKIKTLTIDDAKIIAKQSYVASATPMTSSGGTLTYRNTDLTASLYGVGEQYFDVRGLKLETGRLFDENDVKEDAQVVVIDQNVKDKLFADSDPLGKTILFRKRPLTVIGVMKKDENAFGNSDVLMLWSPYTTVMHQITGESHTNSITVKIKDNANTRVAEKGLAELLKARHGTEDFFMNNSDSIRQMVESTTGTMKLLISSIALISLVVGGIGVMNIMLVSVTERTKEIGIRMAIGARRGNILQQFLIEAVLICIIGGLVGVGLSAAVSLVFNHFVTDFPMDISAASVIGAVACSTGIGIAFGFMPANKAAKLNPIDALAQD.

Positions 4–242 (IECKNINRYF…SNVGRIQEKA (239 aa)) constitute an ABC transporter domain. An ATP-binding site is contributed by 40–47 (GQSGSGKS). The next 4 membrane-spanning stretches (helical) occupy residues 270–290 (LLTM…VALG), 524–544 (IALI…LVSV), 574–594 (LICI…SLVF), and 607–627 (AASV…FGFM).

Belongs to the ABC transporter superfamily. Macrolide exporter (TC 3.A.1.122) family. Homodimer.

It localises to the cell inner membrane. In terms of biological role, non-canonical ABC transporter that contains transmembrane domains (TMD), which form a pore in the inner membrane, and an ATP-binding domain (NBD), which is responsible for energy generation. Overexpression confers resistance against macrolides. This Neisseria gonorrhoeae protein is Macrolide export ATP-binding/permease protein MacB.